We begin with the raw amino-acid sequence, 130 residues long: Large ribosomal subunit protein bL12 (130 aa).

This sequence belongs to the bacterial ribosomal protein bL12 family. As to quaternary structure, homodimer. Part of the ribosomal stalk of the 50S ribosomal subunit. Forms a multimeric L10(L12)X complex, where L10 forms an elongated spine to which 2 to 4 L12 dimers bind in a sequential fashion. Binds GTP-bound translation factors.

Forms part of the ribosomal stalk which helps the ribosome interact with GTP-bound translation factors. Is thus essential for accurate translation. The chain is Large ribosomal subunit protein bL12 from Mycolicibacterium paratuberculosis (strain ATCC BAA-968 / K-10) (Mycobacterium paratuberculosis).